Consider the following 671-residue polypeptide: NADPH--cytochrome P450 reductase (671 aa).

The Lumenal portion of the chain corresponds to 1-14 (MSAEHVEEVVSEEP). A helical membrane pass occupies residues 15–35 (FLGTLDIALLVVLLVGATWYF). At 36–671 (MRSRKKEEAP…QKRYSADVWS (636 aa)) the chain is on the cytoplasmic side. Residues 77-221 (LVVFYGSQTG…DFITWKDRFW (145 aa)) enclose the Flavodoxin-like domain. FMN contacts are provided by residues 83–88 (SQTGTA), 135–138 (ATYG), 170–179 (LGNKTYEHYN), and aspartate 205. Positions 276–515 (KNPFLASVIV…FIRKSQFRLP (240 aa)) constitute an FAD-binding FR-type domain. Arginine 295 contributes to the NADP(+) binding site. Residues 451-454 (RYYS), 469-471 (TAV), tyrosine 475, and 485-488 (GVAT) contribute to the FAD site. Residues threonine 529, 589 to 590 (SR), 595 to 599 (KIYVT), and aspartate 632 each bind NADP(+). Tryptophan 670 provides a ligand contact to FAD.

This sequence belongs to the NADPH--cytochrome P450 reductase family. In the N-terminal section; belongs to the flavodoxin family. The protein in the C-terminal section; belongs to the flavoprotein pyridine nucleotide cytochrome reductase family. FAD is required as a cofactor. The cofactor is FMN.

It is found in the endoplasmic reticulum membrane. The enzyme catalyses 2 oxidized [cytochrome P450] + NADPH = 2 reduced [cytochrome P450] + NADP(+) + H(+). Functionally, this enzyme is required for electron transfer from NADP to cytochrome P450 in microsomes. It can also provide electron transfer to heme oxygenase and cytochrome B5. The protein is NADPH--cytochrome P450 reductase of Musca domestica (House fly).